A 676-amino-acid chain; its full sequence is Lutropin-choriogonadotropic hormone receptor (676 aa).

Positions 1-29 (MKQPLLALQLLKLLLLLLLPLPPLPRALR) are cleaved as a signal peptide. Residues 30-340 (EARCCPEPCN…EDIMGYDFLR (311 aa)) lie on the Extracellular side of the membrane. Asparagine 103 carries an N-linked (GlcNAc...) asparagine glycan. LRR repeat units lie at residues 126 to 151 (LPRL…IFSS), 153 to 175 (TNFI…AFQG), 176 to 200 (MNNE…AFNG), 201 to 224 (TTVI…AFRG), and 225 to 248 (ATGP…GLES). Residues asparagine 178 and asparagine 199 are each glycosylated (N-linked (GlcNAc...) asparagine). Tyrosine 308 is modified (sulfotyrosine). Residues 341 to 362 (VLIWLINILAIMGNMTVLFVLL) form a helical membrane-spanning segment. Topologically, residues 363–372 (TSRYKLTVPR) are cytoplasmic. Residues 373–393 (FLMCNLSFADFCMGLYLLLIA) form a helical membrane-spanning segment. The Extracellular portion of the chain corresponds to 394–416 (SVDSQTKGQYYNHAIDWQTGSGC). Cysteine 416 and cysteine 491 are disulfide-bonded. A helical membrane pass occupies residues 417–439 (NTAGFFTVFASELSVYTLTVITL). Residues 440–459 (ERWHTITYAIHLDQKLRLRH) are Cytoplasmic-facing. Residues 460–482 (AILIMLGGWLFSSLIAMLPLVGV) form a helical membrane-spanning segment. Residues 483-502 (SNYMKVSICFPMDVETTLSQ) lie on the Extracellular side of the membrane. The helical transmembrane segment at 503 to 526 (IYILTILILNVVAFIIICACYIKI) threads the bilayer. At 527–547 (YFAVRNPELMATNKDTKIAKK) the chain is on the cytoplasmic side. A helical transmembrane segment spans residues 548–571 (MAILIFTDFTCMAPISFFAISAAF). Residues 572-582 (KMPLITVTNSK) lie on the Extracellular side of the membrane. A helical membrane pass occupies residues 583–604 (VLLVLFYPINSCANPFLYAIFT). At 605–676 (KTFRRDFFLL…LLDKTCYKEY (72 aa)) the chain is on the cytoplasmic side. S-palmitoyl cysteine attachment occurs at residues cysteine 620 and cysteine 621.

It belongs to the G-protein coupled receptor 1 family. FSH/LSH/TSH subfamily. Post-translationally, sulfated.

It is found in the cell membrane. Receptor for lutropin-choriogonadotropic hormone. The activity of this receptor is mediated by G proteins which activate adenylate cyclase. The polypeptide is Lutropin-choriogonadotropic hormone receptor (LHCGR) (Callithrix jacchus (White-tufted-ear marmoset)).